The primary structure comprises 954 residues: Glycine dehydrogenase (decarboxylating) (954 aa).

Position 704 is an N6-(pyridoxal phosphate)lysine (Lys704).

It belongs to the GcvP family. As to quaternary structure, the glycine cleavage system is composed of four proteins: P, T, L and H. Pyridoxal 5'-phosphate is required as a cofactor.

It catalyses the reaction N(6)-[(R)-lipoyl]-L-lysyl-[glycine-cleavage complex H protein] + glycine + H(+) = N(6)-[(R)-S(8)-aminomethyldihydrolipoyl]-L-lysyl-[glycine-cleavage complex H protein] + CO2. The glycine cleavage system catalyzes the degradation of glycine. The P protein binds the alpha-amino group of glycine through its pyridoxal phosphate cofactor; CO(2) is released and the remaining methylamine moiety is then transferred to the lipoamide cofactor of the H protein. The sequence is that of Glycine dehydrogenase (decarboxylating) from Rhizobium johnstonii (strain DSM 114642 / LMG 32736 / 3841) (Rhizobium leguminosarum bv. viciae).